Here is a 2122-residue protein sequence, read N- to C-terminus: Pecanex-like protein 2 (2122 aa).

2 helical membrane-spanning segments follow: residues 36 to 53 and 60 to 82; these read LYLW…HLAF and ALFY…YRLH. Disordered stretches follow at residues 92-164 and 180-250; these read QHRS…ELPA and QPEA…LVNP. Polar residues-rich tracts occupy residues 146–157 and 185–203; these read SRGQSVHSQHSS and ASST…SQGR. N-linked (GlcNAc...) asparagine glycosylation is present at N288. Composition is skewed to low complexity over residues 392-407 and 458-476; these read VTSS…AESA and PDRC…PGST. 2 disordered regions span residues 392–556 and 575–634; these read VTSS…QIPN and VVAP…PVFT. The span at 528–538 shows a compositional bias: basic and acidic residues; sequence STKEVVSDGEK. Residue N556 is glycosylated (N-linked (GlcNAc...) asparagine). The span at 599–618 shows a compositional bias: basic and acidic residues; sequence TKEEAVENEKPNGRDPKPGK. Over residues 625 to 634 the composition is skewed to polar residues; the sequence is DPANGSPVFT. Helical transmembrane passes span 825 to 845, 849 to 869, 882 to 902, 933 to 953, 976 to 998, 1010 to 1030, 1080 to 1100, 1105 to 1125, 1174 to 1194, 1218 to 1238, 1245 to 1265, 1270 to 1290, and 1305 to 1325; these read VAVL…NRGF, LWVL…LKSV, QIIA…ILLL, HLIV…FPQI, GITS…HAFC, HIPA…YHLS, LVIC…TVFL, FLSI…HHLL, YLLY…SISN, SFCN…FFHF, ESFL…GDLL, FVLA…HVFA, and TFAT…VIFI. N-linked (GlcNAc...) asparagine glycans are attached at residues N1393, N1534, and N1802. Disordered regions lie at residues 1858-1943 and 1955-1991; these read SVGQ…SSGP and STSV…TTGH. Positions 1888 to 1898 are enriched in basic and acidic residues; the sequence is ESRDGSTEQPR. Polar residues predominate over residues 1922-1942; sequence SQSVQAHSAISQRPPTLSSSG. The span at 1968–1981 shows a compositional bias: low complexity; sequence SRLSLHTSAASLHS. An N-linked (GlcNAc...) asparagine glycan is attached at N2039. Residues 2097 to 2122 are disordered; it reads VLCRRASQEDMGLDDTASQQSTSDEQ. Over residues 2112–2122 the composition is skewed to polar residues; that stretch reads TASQQSTSDEQ.

This sequence belongs to the pecanex family.

The protein localises to the membrane. Functionally, may play a role in tumorigenesis. This is Pecanex-like protein 2 from Mus musculus (Mouse).